The primary structure comprises 33 residues: uncharacterized protein (33 aa).

This is an uncharacterized protein from Staphylococcus aureus (strain N315).